Here is a 269-residue protein sequence, read N- to C-terminus: UPF0328 protein ECU03_0020 (269 aa).

Belongs to the UPF0328 family.

The sequence is that of UPF0328 protein ECU03_0020 from Encephalitozoon cuniculi (strain GB-M1) (Microsporidian parasite).